Consider the following 245-residue polypeptide: Membrane-spanning 4-domains subfamily A member 15 (245 aa).

The segment at 1 to 30 is disordered; sequence MWERRGRGESAAGTAAVASRNASGLRPPPA. The next 4 helical transmembrane spans lie at 78–98, 103–123, 147–167, and 176–196; these read GTVQ…LLMV, LGML…FIIS, ILSA…FGVT, and LAVL…ATHF.

The protein belongs to the MS4A family.

It localises to the membrane. Its function is as follows. May be involved in signal transduction as a component of a multimeric receptor complex. This is Membrane-spanning 4-domains subfamily A member 15 (Ms4a15) from Mus musculus (Mouse).